Here is a 466-residue protein sequence, read N- to C-terminus: ATP-dependent protease ATPase subunit HslU (466 aa).

ATP is bound by residues isoleucine 18, glycine 60–glutamate 65, aspartate 279, glutamate 344, and arginine 416.

It belongs to the ClpX chaperone family. HslU subfamily. A double ring-shaped homohexamer of HslV is capped on each side by a ring-shaped HslU homohexamer. The assembly of the HslU/HslV complex is dependent on binding of ATP.

The protein localises to the cytoplasm. ATPase subunit of a proteasome-like degradation complex; this subunit has chaperone activity. The binding of ATP and its subsequent hydrolysis by HslU are essential for unfolding of protein substrates subsequently hydrolyzed by HslV. HslU recognizes the N-terminal part of its protein substrates and unfolds these before they are guided to HslV for hydrolysis. The sequence is that of ATP-dependent protease ATPase subunit HslU from Syntrophomonas wolfei subsp. wolfei (strain DSM 2245B / Goettingen).